A 352-amino-acid polypeptide reads, in one-letter code: C-C chemokine receptor type 5 (352 aa).

Residues 1-30 (MDYQVSSPTYDIDYYTSEPCQKVNVKQIAA) lie on the Extracellular side of the membrane. Y3 carries the sulfotyrosine modification. 2 O-linked (GalNAc...) serine glycosylation sites follow: S6 and S7. Y10, Y14, and Y15 each carry sulfotyrosine. 2 disulfide bridges follow: C20-C269 and C101-C178. The helical transmembrane segment at 31–58 (RLLPPLYSLVFIFGFVGNILVVLILINC) threads the bilayer. Topologically, residues 59-68 (KRLKSMTDIY) are cytoplasmic. Residues 69–89 (LLNLAISDLFFLLTVPFWAHY) traverse the membrane as a helical segment. Topologically, residues 90-102 (AAAQWDFGNTMCQ) are extracellular. A helical membrane pass occupies residues 103 to 124 (LLTGLYFIGFFSGIFFIILLTI). The Cytoplasmic segment spans residues 125-141 (DRYLAIVHAVFALKART). Residues 142–166 (VTFGVVTSVITWVVAVFASLPGIIF) form a helical membrane-spanning segment. Over 167 to 198 (TRSQREGLHYTCSSHFPYSQYQFWKNFQTLKI) the chain is Extracellular. Residues 199–218 (VILGLVLPLLVMVICYSGIL) traverse the membrane as a helical segment. Over 219–235 (KTLLRCRNEKKRHRAVR) the chain is Cytoplasmic. The helical transmembrane segment at 236–260 (LIFTIMIVYFLFWAPYNIVLLLNTF) threads the bilayer. Residues 261 to 277 (QEFFGLNNCSSSNRLDQ) lie on the Extracellular side of the membrane. The chain crosses the membrane as a helical span at residues 278–301 (AMQVTETLGMTHCCINPIIYAFVG). Residues 302 to 352 (EKFRNYLLVFFQKHIAKRFCKCCSIFQQEAPERASSVYTRSTGEQEISVGL) lie on the Cytoplasmic side of the membrane. 3 S-palmitoyl cysteine lipidation sites follow: C321, C323, and C324. S336, S337, S342, and S349 each carry phosphoserine; by BARK1.

Belongs to the G-protein coupled receptor 1 family. In terms of assembly, interacts with PRAF2. Efficient ligand binding to CCL3/MIP-1alpha and CCL4/MIP-1beta requires sulfation, O-glycosylation and sialic acid modifications. Glycosylation on Ser-6 is required for efficient binding of CCL4. Interacts with GRK2. Interacts with ARRB1 and ARRB2. Interacts with CNIH4. Interacts with S100A4; this interaction stimulates T-lymphocyte chemotaxis. In terms of processing, sulfated on at least 2 of the N-terminal tyrosines. Sulfation is required for efficient binding of the chemokines, CCL3 and CCL4. Post-translationally, palmitoylation in the C-terminal is important for cell surface expression. Phosphorylation on serine residues in the C-terminal is stimulated by binding CC chemokines especially by APO-RANTES. In terms of processing, O-glycosylated, but not N-glycosylated. Ser-6 appears to be the major site even if Ser-7 may be also O-glycosylated. Also sialylated glycans present which contribute to chemokine binding. Thr-16 and Ser-17 may also be glycosylated and, if so, with small moieties such as a T-antigen.

The protein localises to the cell membrane. Receptor for a number of inflammatory CC-chemokines including CCL3/MIP-1-alpha, CCL4/MIP-1-beta and RANTES and subsequently transduces a signal by increasing the intracellular calcium ion level. May play a role in the control of granulocytic lineage proliferation or differentiation. Participates in T-lymphocyte migration to the infection site by acting as a chemotactic receptor. The sequence is that of C-C chemokine receptor type 5 (CCR5) from Semnopithecus entellus (Northern plains gray langur).